Reading from the N-terminus, the 179-residue chain is Large ribosomal subunit protein uL5 (179 aa).

Belongs to the universal ribosomal protein uL5 family. In terms of assembly, part of the 50S ribosomal subunit; part of the 5S rRNA/L5/L18/L25 subcomplex. Contacts the 5S rRNA and the P site tRNA. Forms a bridge to the 30S subunit in the 70S ribosome.

Functionally, this is one of the proteins that bind and probably mediate the attachment of the 5S RNA into the large ribosomal subunit, where it forms part of the central protuberance. In the 70S ribosome it contacts protein S13 of the 30S subunit (bridge B1b), connecting the 2 subunits; this bridge is implicated in subunit movement. Contacts the P site tRNA; the 5S rRNA and some of its associated proteins might help stabilize positioning of ribosome-bound tRNAs. In Caldanaerobacter subterraneus subsp. tengcongensis (strain DSM 15242 / JCM 11007 / NBRC 100824 / MB4) (Thermoanaerobacter tengcongensis), this protein is Large ribosomal subunit protein uL5.